Here is an 874-residue protein sequence, read N- to C-terminus: Alanine--tRNA ligase (874 aa).

Residues H563, H567, C665, and H669 each contribute to the Zn(2+) site.

This sequence belongs to the class-II aminoacyl-tRNA synthetase family. Zn(2+) is required as a cofactor.

It is found in the cytoplasm. It carries out the reaction tRNA(Ala) + L-alanine + ATP = L-alanyl-tRNA(Ala) + AMP + diphosphate. Functionally, catalyzes the attachment of alanine to tRNA(Ala) in a two-step reaction: alanine is first activated by ATP to form Ala-AMP and then transferred to the acceptor end of tRNA(Ala). Also edits incorrectly charged Ser-tRNA(Ala) and Gly-tRNA(Ala) via its editing domain. The sequence is that of Alanine--tRNA ligase from Haemophilus influenzae (strain 86-028NP).